A 608-amino-acid chain; its full sequence is Isoprene synthase, chloroplastic (608 aa).

Residues 1–45 constitute a chloroplast transit peptide; it reads MATNLLCLSNKLSSPTPTPSTRFPQSKNFITQKTSLANPKPWRVI. Aspartate 350 is a binding site for dimethylallyl diphosphate. The Mg(2+) site is built by aspartate 350 and aspartate 354. Residues 350–354 carry the DDXXD motif motif; that stretch reads DDVYD. Residues glutamate 428, arginine 494, and asparagine 497 each coordinate dimethylallyl diphosphate. Mg(2+) is bound by residues asparagine 497, threonine 501, and glutamate 505.

It belongs to the terpene synthase family. Tpsb subfamily. The cofactor is Mg(2+). It depends on Mn(2+) as a cofactor.

The protein localises to the plastid. It localises to the chloroplast. The enzyme catalyses dimethylallyl diphosphate = isoprene + diphosphate. In terms of biological role, lyase that catalyzes the formation of isoprene from dimethylallyl diphosphate. The polypeptide is Isoprene synthase, chloroplastic (ISPS) (Pueraria montana var. lobata (Kudzu vine)).